We begin with the raw amino-acid sequence, 169 residues long: Glycine-rich RNA-binding protein 8 (169 aa).

The 79-residue stretch at 6 to 84 (YRCFVGGLAW…RVITVNEAQS (79 aa)) folds into the RRM domain. At Arg47 the chain carries ADP-ribosylarginine; by HopU1. Residues 80–99 (NEAQSRGSGGGGGGRGGSGG) form a disordered region. Residues 86–99 (GSGGGGGGRGGSGG) are compositionally biased toward gly residues. The glycine-rich (GR) required for cell-to-cell movement stretch occupies residues 86-168 (GSGGGGGGRG…GGSYGGGGGG (83 aa)). The interval 95–143 (GGSGGGYRSGGGGGYSGGGGGGYSGGGGGGYERRSGGYGSGGGGGGRGY) is nuclear targeting sequence (M9). The residue at position 103 (Ser103) is a Phosphoserine. The segment at 130-169 (GGYGSGGGGGGRGYGGGGRREGGGYGGGDGGSYGGGGGGW) is disordered.

Belongs to the GR-RBP family. Interacts with TRN1. Binds to small phloem-mobile single-stranded RNAs (ss-sRNA, e.g. small interfering RNA (siRNA) and microRNA (miRNA)) in the phloeme exudate, including viral-derived sRNA (vsiRNA). Post-translationally, ADP-ribosylated by the Pseudomonas syringae type III effector HopU1. ADP-ribosylation reduces the ability of the protein to bind RNA. As to expression, ubiquitous.

The protein localises to the cytoplasm. Its subcellular location is the nucleus. It localises to the secreted. In terms of biological role, plays a role in RNA transcription or processing during stress. Binds RNAs and DNAs sequence with a preference to single-stranded nucleic acids. Involved in mRNA alternative splicing of numerous targets by modulating splice site selection. Negatively regulates the circadian oscillations of its own transcript as well as RBG7 transcript. Forms an interlocked post-transcriptional negative feedback loop with the RBG7 autoregulatory circuit. Both proteins negatively autoregulate and reciprocally crossregulate by binding to their pre-mRNAs and promoting unproductive splicing coupled to degradation via the NMD pathway. Target of the Pseudomonas syringae type III effector HopU1. Mediates cell-to-cell trafficking of RNA interference (RNAi) signals (small RNAs (sRNA), e.g. small interfering RNA (siRNA) and microRNA (miRNA)) which regulate growth and development, as well as responses to environmental inputs, including pathogen attack; can compromise zucchini yellow mosaic virus (ZYMV) and tobacco rattle virus (TRV) infections at the early stage. This Arabidopsis thaliana (Mouse-ear cress) protein is Glycine-rich RNA-binding protein 8.